The sequence spans 365 residues: uncharacterized protein (365 aa).

A coiled-coil region spans residues 18–46 (TAQEALTLIEKLDSDYKEKEEKITALSVH).

This is an uncharacterized protein from Bacillus subtilis (strain 168).